Reading from the N-terminus, the 510-residue chain is Probable cytosol aminopeptidase (510 aa).

2 residues coordinate Mn(2+): lysine 282 and aspartate 287. Residue lysine 294 is part of the active site. Positions 305, 364, and 366 each coordinate Mn(2+). Arginine 368 is a catalytic residue.

The protein belongs to the peptidase M17 family. Mn(2+) is required as a cofactor.

The protein localises to the cytoplasm. The enzyme catalyses Release of an N-terminal amino acid, Xaa-|-Yaa-, in which Xaa is preferably Leu, but may be other amino acids including Pro although not Arg or Lys, and Yaa may be Pro. Amino acid amides and methyl esters are also readily hydrolyzed, but rates on arylamides are exceedingly low.. It catalyses the reaction Release of an N-terminal amino acid, preferentially leucine, but not glutamic or aspartic acids.. Functionally, presumably involved in the processing and regular turnover of intracellular proteins. Catalyzes the removal of unsubstituted N-terminal amino acids from various peptides. This Cupriavidus metallidurans (strain ATCC 43123 / DSM 2839 / NBRC 102507 / CH34) (Ralstonia metallidurans) protein is Probable cytosol aminopeptidase.